The primary structure comprises 851 residues: Phosphatidylinositol 4-kinase pik1 (851 aa).

The region spanning 1-123 (MPSSNSGNEL…KICKRLYNRI (123 aa)) is the PIK helical domain. A phosphoserine mark is found at S202, S219, S222, and S235. Y236 bears the Phosphotyrosine mark. The interval 384–404 (LQDSTDNDISESESEGGDLSM) is disordered. Over residues 388 to 399 (TDNDISESESEG) the composition is skewed to acidic residues. A PI3K/PI4K catalytic domain is found at 558 to 836 (YAKKERIRKS…LIQKANCSVW (279 aa)). The G-loop stretch occupies residues 564–570 (IRKSSPY). The tract at residues 706–714 (QLKDRHNGN) is catalytic loop. Residues 725–749 (HIDFGFLLTNTPGNVGFESAPFKLT) form an activation loop region.

Belongs to the PI3/PI4-kinase family. In terms of assembly, interacts with cdc4 and cam2.

Its subcellular location is the golgi apparatus. It localises to the nucleus. It catalyses the reaction a 1,2-diacyl-sn-glycero-3-phospho-(1D-myo-inositol) + ATP = a 1,2-diacyl-sn-glycero-3-phospho-(1D-myo-inositol 4-phosphate) + ADP + H(+). Its function is as follows. Acts on phosphatidylinositol (PI) in the first committed step in the production of the second messenger inositol 1,4,5,-trisphosphate. PIK1 is part of a nuclear phosphoinositide cycle and could control cytokinesis through the actin cytoskeleton. This chain is Phosphatidylinositol 4-kinase pik1 (pik1), found in Schizosaccharomyces pombe (strain 972 / ATCC 24843) (Fission yeast).